The sequence spans 389 residues: Chalcone synthase 8 (389 aa).

The active site involves Cys164.

Belongs to the thiolase-like superfamily. Chalcone/stilbene synthases family.

The catalysed reaction is (E)-4-coumaroyl-CoA + 3 malonyl-CoA + 3 H(+) = 2',4,4',6'-tetrahydroxychalcone + 3 CO2 + 4 CoA. It functions in the pathway secondary metabolite biosynthesis; flavonoid biosynthesis. Its function is as follows. The primary product of this enzyme is 4,2',4',6'-tetrahydroxychalcone (also termed naringenin-chalcone or chalcone) which can under specific conditions spontaneously isomerize into naringenin. This is Chalcone synthase 8 (CHS8) from Medicago sativa (Alfalfa).